Reading from the N-terminus, the 306-residue chain is Ornithine carbamoyltransferase (306 aa).

Residues 46 to 49 (STRT), Gln-73, Arg-97, and 124 to 127 (HPTQ) contribute to the carbamoyl phosphate site. L-ornithine contacts are provided by residues Asn-156, Asp-220, and 224–225 (SM). Carbamoyl phosphate contacts are provided by residues 260–261 (CL) and Arg-288.

Belongs to the aspartate/ornithine carbamoyltransferase superfamily. OTCase family.

The protein localises to the cytoplasm. The enzyme catalyses carbamoyl phosphate + L-ornithine = L-citrulline + phosphate + H(+). It participates in amino-acid degradation; L-arginine degradation via ADI pathway; carbamoyl phosphate from L-arginine: step 2/2. Reversibly catalyzes the transfer of the carbamoyl group from carbamoyl phosphate (CP) to the N(epsilon) atom of ornithine (ORN) to produce L-citrulline. In Campylobacter jejuni subsp. jejuni serotype O:6 (strain 81116 / NCTC 11828), this protein is Ornithine carbamoyltransferase.